The following is a 199-amino-acid chain: Fe/S biogenesis protein NfuA (199 aa).

[4Fe-4S] cluster contacts are provided by cysteine 156 and cysteine 159.

It belongs to the NfuA family. As to quaternary structure, homodimer. The cofactor is [4Fe-4S] cluster.

Its function is as follows. Involved in iron-sulfur cluster biogenesis. Binds a 4Fe-4S cluster, can transfer this cluster to apoproteins, and thereby intervenes in the maturation of Fe/S proteins. Could also act as a scaffold/chaperone for damaged Fe/S proteins. The polypeptide is Fe/S biogenesis protein NfuA (Actinobacillus pleuropneumoniae serotype 5b (strain L20)).